A 309-amino-acid chain; its full sequence is Prepilin leader peptidase/N-methyltransferase (309 aa).

Residues 35-55 traverse the membrane as a helical segment; that stretch reads MQLAFAIVLGLVVGSFLNVVV. Residues Cys-96, Cys-99, Cys-121, and Cys-124 each coordinate Zn(2+). A run of 6 helical transmembrane segments spans residues 147–167, 183–203, 207–227, 230–250, 253–273, and 288–308; these read LALFGPSGAALAAFGLCAALL, LTLPLLWAGLCVNLWGTFASL, VIGAIAGYLFLWCILWLFKLL, IEGIGYGDLKLLAALGAWLGW, LPQVVLIAAVAGAAVGLVATW, and FLAAGGAATLFFGTPFYLLLG.

It belongs to the peptidase A24 family. Zn(2+) is required as a cofactor.

Its subcellular location is the cell inner membrane. It carries out the reaction Typically cleaves a -Gly-|-Phe- bond to release an N-terminal, basic peptide of 5-8 residues from type IV prepilin, and then N-methylates the new N-terminal amino group, the methyl donor being S-adenosyl-L-methionine.. Its function is as follows. Plays an essential role in type IV pili and type II pseudopili formation by proteolytically removing the leader sequence from substrate proteins and subsequently monomethylating the alpha-amino group of the newly exposed N-terminal phenylalanine. The protein is Prepilin leader peptidase/N-methyltransferase (gspO) of Burkholderia pseudomallei (strain 1026b).